The following is a 359-amino-acid chain: C-X-C chemokine receptor type 4 (359 aa).

An important for chemokine binding and signaling region spans residues 1 to 23 (MEPISVSIYTSDNYSEEVGSGDY). Residues 1–40 (MEPISVSIYTSDNYSEEVGSGDYDSNKEPCFRDENVHFNR) are Extracellular-facing. Tyr-9 bears the Sulfotyrosine mark. Asn-13 is a glycosylation site (N-linked (GlcNAc...) asparagine). The residue at position 14 (Tyr-14) is a Sulfotyrosine. A glycan (O-linked (Xyl...) (chondroitin sulfate) serine) is linked at Ser-20. Residue Tyr-23 is modified to Sulfotyrosine. Intrachain disulfides connect Cys-30/Cys-281 and Cys-111/Cys-193. A helical membrane pass occupies residues 41–65 (IFLPTIYFIIFLTGIVGNGLVILVM). The Cytoplasmic segment spans residues 66–79 (GYQKKLRSMTDKYR). A helical membrane pass occupies residues 80-101 (LHLSVADLLFVITLPFWAVDAM). The segment at 96–99 (WAVD) is chemokine binding. The Extracellular portion of the chain corresponds to 102–112 (ADWYFGKFLCK). A helical membrane pass occupies residues 113–132 (AVHIIYTVNLYSSVLILAFI). Residues 115-119 (HIIYT) are chemokine binding. The Cytoplasmic portion of the chain corresponds to 133 to 156 (SLDRYLAIVHATNSQRPRKLLAEK). An Important for signaling motif is present at residues 135–137 (DRY). Positions 137-149 (YLAIVHATNSQRP) are involved in dimerization; when bound to chemokine. Residues 157 to 176 (AVYVGVWIPALLLTIPDFIF) traverse the membrane as a helical segment. Topologically, residues 177 to 202 (ADVSQGDISQGDDRYICDRLYPDSLW) are extracellular. Residues 193-197 (CDRLY) are chemokine binding, important for signaling. Residues 198-217 (PDSLWMVVFQFQHIMVGLIL) form an involved in dimerization region. Residues 203–223 (MVVFQFQHIMVGLILPGIVIL) traverse the membrane as a helical segment. Topologically, residues 224-248 (SCYCIIISKLSHSKGHQKRKALKTT) are cytoplasmic. Residues 249 to 268 (VILILAFFACWLPYYVGISI) traverse the membrane as a helical segment. Over 269 to 289 (DSFILLGVIKQGCDFESIVHK) the chain is Extracellular. The interval 273-275 (LLG) is involved in dimerization. Residues 290 to 309 (WISITEALAFFHCCLNPILY) form a helical membrane-spanning segment. The Cytoplasmic segment spans residues 310-359 (AFLGAKFKSSAQHALNSMSRGSSLKILSKGKRGGHSSVSTESESSSFHSS). Phosphoserine occurs at positions 326 and 328. Residues Ser-331 and Ser-332 each carry the phosphoserine; by PKC and GRK6 modification. The disordered stretch occupies residues 335–359 (ILSKGKRGGHSSVSTESESSSFHSS). Residue Ser-337 is modified to Phosphoserine; by GRK6. A Glycyl lysine isopeptide (Lys-Gly) (interchain with G-Cter in ubiquitin) cross-link involves residue Lys-338. Over residues 344-359 (HSSVSTESESSSFHSS) the composition is skewed to low complexity. Residue Ser-346 is modified to Phosphoserine; by GRK6. Ser-355 and Ser-358 each carry phosphoserine.

Belongs to the G-protein coupled receptor 1 family. Monomer. Can form homodimers. Interacts with CD164. Interacts with ARRB2; the interaction is dependent on the C-terminal phosphorylation of CXCR4 and allows activation of MAPK1 and MAPK3. Interacts with ARR3; the interaction is dependent on the C-terminal phosphorylation of CXCR4 and modulates calcium mobilization. Interacts with RNF113A; the interaction, enhanced by CXCL12, promotes CXCR4 ubiquitination and subsequent degradation. Interacts (via the cytoplasmic C-terminal) with ITCH (via the WW domains I and II); the interaction, enhanced by CXCL12, promotes CXCR4 ubiquitination and leads to its degradation. Interacts with extracellular ubiquitin. Interacts with DBN1; this interaction is enhanced by antigenic stimulation. Following LPS binding, may form a complex with GDF5, HSP90AA1 and HSPA8. Phosphorylated on agonist stimulation. Rapidly phosphorylated on serine and threonine residues in the C-terminal. Phosphorylation at Ser-331 and Ser-332 leads to recruitment of ITCH, ubiquitination and protein degradation. Post-translationally, ubiquitinated after ligand binding, leading to its degradation. Ubiquitinated by ITCH at the cell membrane on agonist stimulation. The ubiquitin-dependent mechanism, endosomal sorting complex required for transport (ESCRT), then targets CXCR4 for lysosomal degradation. This process is dependent also on prior Ser-/Thr-phosphorylation in the C-terminal of CXCR4. Also binding of ARRB1 to STAM negatively regulates CXCR4 sorting to lysosomes though modulating ubiquitination of SFR5S. In terms of processing, sulfation is required for efficient binding of CXCL12/SDF-1alpha and promotes its dimerization. O- and N-glycosylated. N-glycosylation can mask coreceptor function. The O-glycosylation chondroitin sulfate attachment does not affect interaction with CXCL12/SDF-1alpha nor its coreceptor activity. Lymphocytes, macrophages, neutrophils, microglial cells and astrocytes. Found in spleen, thymus, bone marrow, lymph nodes and, at lower levels in brain, small intestine, stomach and kidney. CXCR4-A is predominant in all tissues tested. During embryonic development, high levels are detected in the endothelium of developing blood vessels and in many regions of the developing brain including the olfactory epithelium, olfactory bulb, hippocampus, cerebellum and spinal cord.

It localises to the cell membrane. The protein resides in the cell junction. The protein localises to the early endosome. Its subcellular location is the late endosome. It is found in the lysosome. Its function is as follows. Receptor for the C-X-C chemokine CXCL12/SDF-1 that transduces a signal by increasing intracellular calcium ion levels and enhancing MAPK1/MAPK3 activation. Involved in the AKT signaling cascade. Plays a role in regulation of cell migration, e.g. during wound healing. Acts as a receptor for extracellular ubiquitin; leading to enhanced intracellular calcium ions and reduced cellular cAMP levels. Binds bacterial lipopolysaccharide (LPS) et mediates LPS-induced inflammatory response, including TNF secretion by monocytes. Involved in hematopoiesis and in cardiac ventricular septum formation. Also plays an essential role in vascularization of the gastrointestinal tract, probably by regulating vascular branching and/or remodeling processes in endothelial cells. Involved in cerebellar development. In the CNS, could mediate hippocampal-neuron survival. The chain is C-X-C chemokine receptor type 4 (Cxcr4) from Mus musculus (Mouse).